The chain runs to 57 residues: Preprotein translocase subunit SecG (57 aa).

The Cytoplasmic portion of the chain corresponds to 1–33; sequence MARRRRYEGLNPFVAAGLIKFSEEGELERIKLT. A helical transmembrane segment spans residues 34-55; sequence PKSAVVISVALIAAILVLNLIH. The Extracellular segment spans residues 56–57; the sequence is PL.

It belongs to the SEC61-beta family. Component of the protein translocase complex. Heterotrimer consisting of alpha (SecY), beta (SecG) and gamma (SecE) subunits. Can form oligomers of the heterotrimer.

The protein resides in the cell membrane. Functionally, involved in protein export. The function of the beta subunit is unknown, but it may be involved in stabilization of the trimeric complex. The protein is Preprotein translocase subunit SecG of Pyrobaculum neutrophilum (strain DSM 2338 / JCM 9278 / NBRC 100436 / V24Sta) (Thermoproteus neutrophilus).